Here is a 277-residue protein sequence, read N- to C-terminus: Polyamine aminopropyltransferase (277 aa).

Positions 2–235 constitute a PABS domain; it reads ELWFTENQDE…SLWTFTMGSK (234 aa). S-methyl-5'-thioadenosine is bound at residue Q31. The spermidine site is built by H62 and D86. S-methyl-5'-thioadenosine-binding positions include E106 and 137–138; that span reads DG. D155 acts as the Proton acceptor in catalysis. Residue 155–158 participates in spermidine binding; it reads DSTD. Residue P162 participates in S-methyl-5'-thioadenosine binding.

This sequence belongs to the spermidine/spermine synthase family. In terms of assembly, homodimer or homotetramer.

The protein localises to the cytoplasm. The catalysed reaction is S-adenosyl 3-(methylsulfanyl)propylamine + putrescine = S-methyl-5'-thioadenosine + spermidine + H(+). It participates in amine and polyamine biosynthesis; spermidine biosynthesis; spermidine from putrescine: step 1/1. Its function is as follows. Catalyzes the irreversible transfer of a propylamine group from the amino donor S-adenosylmethioninamine (decarboxy-AdoMet) to putrescine (1,4-diaminobutane) to yield spermidine. The protein is Polyamine aminopropyltransferase of Thermoanaerobacter pseudethanolicus (strain ATCC 33223 / 39E) (Clostridium thermohydrosulfuricum).